A 254-amino-acid polypeptide reads, in one-letter code: Claudin-16 (254 aa).

Residues 1-22 (MGPGLAASHVSFPDSLLAKMRD) are Cytoplasmic-facing. A helical membrane pass occupies residues 23–43 (LLQYVACFFAFFSAGFLVVAT). At 44–98 (WTDCWMVNADDSLEVSTKCRGLWWECVTNAFDGIRTCDEYDSILAEHSLKLVVTR) the chain is on the extracellular side. A helical transmembrane segment spans residues 99–119 (ALMITADILAGFGFITLLLGL). The Cytoplasmic segment spans residues 120–134 (DCVKFLPDEPYIKVR). The helical transmembrane segment at 135 to 155 (ISFVAGTTLLIAGAPGIIGSV) threads the bilayer. Residues 156 to 188 (WYAVDVYVERSSLVLHNIFLGIQYKFGWSCWLG) are Extracellular-facing. The chain crosses the membrane as a helical span at residues 189 to 209 (MAGSLGCFLAGAILTCCLYLF). Residues 210–254 (KDVGPERSYPYSTRKAYSTTAVSMPRSHAIPRTQTAKMYAVDTRV) lie on the Cytoplasmic side of the membrane. The short motif at 252–254 (TRV) is the Interaction with TJP1 element.

Belongs to the claudin family. Can form heteropolymeric tight junction strands with other claudins. Interacts with CLDN19. Interacts (via PDZ-binding motif TRV) with TJP1 (via PDZ domain). Cannot form tight junction strands on its own. Expressed preferentially in kidney.

The protein localises to the cell junction. It is found in the tight junction. Its subcellular location is the cell membrane. The catalysed reaction is Mg(2+)(in) = Mg(2+)(out). The enzyme catalyses Ca(2+)(in) = Ca(2+)(out). It catalyses the reaction Na(+)(in) = Na(+)(out). It carries out the reaction K(+)(in) = K(+)(out). The catalysed reaction is Rb(+)(in) = Rb(+)(out). The enzyme catalyses Cs(+)(in) = Cs(+)(out). It catalyses the reaction Li(+)(in) = Li(+)(out). Forms paracellular channels: coassembles with CLDN19 into tight junction strands with cation-selective channels through the strands, conveying epithelial permeability in a process known as paracellular tight junction permeability. Involved in the maintenance of ion gradients along the nephron. In the thick ascending limb (TAL) of Henle's loop, facilitates sodium paracellular permeability from the interstitial compartment to the lumen, contributing to the lumen-positive transepithelial potential that drives paracellular magnesium and calcium reabsorption. The protein is Claudin-16 (CLDN16) of Bos taurus (Bovine).